A 274-amino-acid chain; its full sequence is Shikimate kinase (274 aa).

86-96 (PVGKGLKSSSA) provides a ligand contact to ATP.

This sequence belongs to the GHMP kinase family. Archaeal shikimate kinase subfamily.

The protein localises to the cytoplasm. It catalyses the reaction shikimate + ATP = 3-phosphoshikimate + ADP + H(+). Its pathway is metabolic intermediate biosynthesis; chorismate biosynthesis; chorismate from D-erythrose 4-phosphate and phosphoenolpyruvate: step 5/7. The chain is Shikimate kinase (aroK) from Pyrococcus abyssi (strain GE5 / Orsay).